The primary structure comprises 179 residues: Large ribosomal subunit protein uL6 (179 aa).

Belongs to the universal ribosomal protein uL6 family. In terms of assembly, part of the 50S ribosomal subunit.

This protein binds to the 23S rRNA, and is important in its secondary structure. It is located near the subunit interface in the base of the L7/L12 stalk, and near the tRNA binding site of the peptidyltransferase center. The sequence is that of Large ribosomal subunit protein uL6 from Leptospira interrogans serogroup Icterohaemorrhagiae serovar copenhageni (strain Fiocruz L1-130).